Reading from the N-terminus, the 523-residue chain is Sodium-dependent lysophosphatidylcholine symporter 1-B (523 aa).

The Cytoplasmic portion of the chain corresponds to 1-34; that stretch reads MAKGEGAEQYTNTSLLQKPSPDEVKLAKHETKSR. The helical transmembrane segment at 35–64 threads the bilayer; it reads LSVCSKLCYAIGGAPYQITGCAIGFFLQIY. At 65 to 75 the chain is on the extracellular side; the sequence is LLDVALLDPFY. Residues 76–96 form a helical membrane-spanning segment; the sequence is ASIILFVGRAWDAVTDPTVGF. The Cytoplasmic segment spans residues 97 to 108; it reads LVSRTPWTRFGR. Residues 109–128 traverse the membrane as a helical segment; the sequence is MMPWIVLSTPFAVLCYFLIW. Residues 129-138 lie on the Extracellular side of the membrane; sequence YVPSVDQGKV. The helical transmembrane segment at 139–163 threads the bilayer; it reads VWYLIFYCCFQTLQTCFHVPYSALT. Residues 164–170 are Cytoplasmic-facing; that stretch reads MFISTEQ. The chain crosses the membrane as a helical span at residues 171–202; the sequence is KERDSATAYRMTVEVLGTLIGTAIQGQIVGMA. Residues 203–226 are Extracellular-facing; the sequence is NAPCISTEIDLNSTGLEVAPDVNI. Cysteine 206 and cysteine 457 form a disulfide bridge. Asparagine 214 and asparagine 225 each carry an N-linked (GlcNAc...) asparagine glycan. A helical membrane pass occupies residues 227–260; sequence TDPHVSLQDLRNAYMIASGVICAIYVVCAVVLFL. Topologically, residues 261–290 are cytoplasmic; that stretch reads GVKEQKDTCRVRTEPMSFFQGICMVMGHGP. Residues 291–317 form a helical membrane-spanning segment; that stretch reads YAKLVMGFLFTSLAFMLLEGNFALFCI. Residues 318–328 lie on the Extracellular side of the membrane; that stretch reads YNLGFRNDFQN. A helical transmembrane segment spans residues 329–347; that stretch reads VLLVIMLSATLAIPFWQWF. The Cytoplasmic segment spans residues 348-351; the sequence is LTKF. The helical transmembrane segment at 352 to 373 threads the bilayer; it reads GKKTAVYIGTTSVVPFLISVVL. The Extracellular segment spans residues 374–376; it reads VPS. Residues 377–413 form a helical membrane-spanning segment; it reads SLAVTYIASFAAGVSVAAAFLLPWSMLPDVVDDFKVQ. The Cytoplasmic portion of the chain corresponds to 414 to 423; the sequence is NPESQGHEAI. Residues 424 to 450 traverse the membrane as a helical segment; the sequence is FYSFYVFFTKFASGVSLGVSTLSLDFA. The Extracellular segment spans residues 451–462; it reads GYVTRGCTQPGE. A helical transmembrane segment spans residues 463–486; it reads VKLTLKILVSAAPIVLIIIGLLIF. Topologically, residues 487–523 are cytoplasmic; it reads ISYPINEEKRQGNRKLLNEQRENEMDSETDSTELNVV. The segment at 504–523 is disordered; it reads NEQRENEMDSETDSTELNVV.

Belongs to the major facilitator superfamily. Expressed in the developing nervous system.

It is found in the cell membrane. The protein localises to the endoplasmic reticulum membrane. It catalyses the reaction a 1-acyl-sn-glycero-3-phosphocholine(in) + Na(+)(in) = a 1-acyl-sn-glycero-3-phosphocholine(out) + Na(+)(out). It carries out the reaction 1-(4Z,7Z,10Z,13Z,16Z,19Z-docosahexaenoyl)-sn-glycero-3-phosphocholine(in) + Na(+)(in) = 1-(4Z,7Z,10Z,13Z,16Z,19Z-docosahexaenoyl)-sn-glycero-3-phosphocholine(out) + Na(+)(out). The enzyme catalyses 1-(9Z-octadecenoyl)-sn-glycero-3-phosphocholine(in) + Na(+)(in) = 1-(9Z-octadecenoyl)-sn-glycero-3-phosphocholine(out) + Na(+)(out). The catalysed reaction is 1-hexadecanoyl-sn-glycero-3-phosphocholine(in) + Na(+)(in) = 1-hexadecanoyl-sn-glycero-3-phosphocholine(out) + Na(+)(out). It catalyses the reaction a 1-acyl-sn-glycero-3-phosphoethanolamine(in) + Na(+)(in) = a 1-acyl-sn-glycero-3-phosphoethanolamine(out) + Na(+)(out). In terms of biological role, sodium-dependent lysophosphatidylcholine (LPC) symporter, which plays an essential role for blood-brain barrier formation and function. Specifically expressed in endothelium of the blood-brain barrier of micro-vessels and transports LPC into the brain. Transport of LPC is essential because it constitutes the major mechanism by which docosahexaenoic acid (DHA), an omega-3 fatty acid that is essential for normal brain growth and cognitive function, enters the brain. Transports LPC carrying long-chain fatty acids such LPC oleate and LPC palmitate with a minimum acyl chain length of 14 carbons. Does not transport docosahexaenoic acid in unesterified fatty acid. In Danio rerio (Zebrafish), this protein is Sodium-dependent lysophosphatidylcholine symporter 1-B (mfsd2ab).